A 332-amino-acid polypeptide reads, in one-letter code: Phospho-N-acetylmuramoyl-pentapeptide-transferase (332 aa).

Helical transmembrane passes span 3–23, 52–72, 74–94, 115–135, 140–160, 172–192, 197–217, 223–243, 248–268, and 311–331; these read FALM…PRFI, MGGT…ATAF, LLTG…VVGF, LALQ…GAGG, VFGH…FWLV, IDGL…VIAF, FDIL…FVYN, IFMG…ISIA, WTLL…MLQV, and VDFF…AILY.

Belongs to the glycosyltransferase 4 family. MraY subfamily. Requires Mg(2+) as cofactor.

It localises to the cell membrane. The catalysed reaction is UDP-N-acetyl-alpha-D-muramoyl-L-alanyl-gamma-D-glutamyl-L-lysyl-D-alanyl-D-alanine + di-trans,octa-cis-undecaprenyl phosphate = Mur2Ac(oyl-L-Ala-gamma-D-Glu-L-Lys-D-Ala-D-Ala)-di-trans,octa-cis-undecaprenyl diphosphate + UMP. It functions in the pathway cell wall biogenesis; peptidoglycan biosynthesis. In terms of biological role, catalyzes the initial step of the lipid cycle reactions in the biosynthesis of the cell wall peptidoglycan: transfers peptidoglycan precursor phospho-MurNAc-pentapeptide from UDP-MurNAc-pentapeptide onto the lipid carrier undecaprenyl phosphate, yielding undecaprenyl-pyrophosphoryl-MurNAc-pentapeptide, known as lipid I. In Streptococcus suis (strain 98HAH33), this protein is Phospho-N-acetylmuramoyl-pentapeptide-transferase.